The following is a 460-amino-acid chain: A-type ATP synthase subunit B (460 aa).

The protein belongs to the ATPase alpha/beta chains family. As to quaternary structure, has multiple subunits with at least A(3), B(3), C, D, E, F, H, I and proteolipid K(x).

Its subcellular location is the cell membrane. Functionally, component of the A-type ATP synthase that produces ATP from ADP in the presence of a proton gradient across the membrane. The B chain is a regulatory subunit. The polypeptide is A-type ATP synthase subunit B (Methanosarcina barkeri).